The primary structure comprises 178 residues: MERLVGKPAPEFEMKAVKGDGRGFTEVKLGDYKGKWLVMFFYPLDFTFVCPTEITGFSKRAEEFRDLKAELLAVSCDSQYSHETWINQDIKQGGLGKINFPIASDKTTEVSTKYGIQIEEEGISLRGLFIIDPEGIVRYSVVHDLNVGRSVDETLRVLKAFQTGGMCALDWHEGDDNL.

A Thioredoxin domain is found at 3 to 163; that stretch reads RLVGKPAPEF…TLRVLKAFQT (161 aa). Residue cysteine 50 is the Cysteine sulfenic acid (-SOH) intermediate of the active site.

Belongs to the peroxiredoxin family. AhpC/Prx1 subfamily. Homodimer; disulfide-linked, upon oxidation.

The protein localises to the cytoplasm. It catalyses the reaction a hydroperoxide + [protein]-dithiol = [protein]-disulfide + an alcohol + H2O. Thiol-specific peroxidase that catalyzes the reduction of hydrogen peroxide and organic hydroperoxides to water and alcohols, respectively. Plays a role in cell protection against oxidative stress by detoxifying peroxides. This is Putative peroxiredoxin in rubredoxin operon from Clostridium pasteurianum.